The primary structure comprises 988 residues: Voltage-gated delayed rectifier potassium channel KCNH5 (988 aa).

Residues 1 to 217 are Cytoplasmic-facing; the sequence is MPGGKRGLVA…LHYCAFKTTW (217 aa). The PAS domain maps to 12-90; the sequence is QNTFLENIVR…VRQTFDNYES (79 aa). The 53-residue stretch at 91–143 folds into the PAC domain; sequence NCFEVLLYKKNRTPVWFYMQIAPIRNEHEKVVLFLCTFKDITLFKQPIEDDST. A helical transmembrane segment spans residues 218–238; sequence DWVILILTFYTAIMVPYNVSF. Topologically, residues 239–243 are extracellular; that stretch reads KTKQN. Residues 244 to 264 traverse the membrane as a helical segment; that stretch reads NIAWLVLDSVVDVIFLVDIVL. Residues 265–291 are Cytoplasmic-facing; it reads NFHTTFVGPGGEVISDPKLIRMNYLKT. A helical membrane pass occupies residues 292-312; it reads WFVIDLLSCLPYDIINAFENV. The Extracellular segment spans residues 313–319; that stretch reads DEGISSL. The chain crosses the membrane as a helical; Voltage-sensor span at residues 320-340; the sequence is FSSLKVVRLLRLGRVARKLDH. At 341-346 the chain is on the cytoplasmic side; the sequence is YLEYGA. The helical transmembrane segment at 347 to 367 threads the bilayer; it reads AVLVLLVCVFGLVAHWLACIW. Residues 368–419 lie on the Extracellular side of the membrane; it reads YSIGDYEVIDEVTNTIQIDSWLYQLALSIGTPYRYNTSAGIWEGGPSKDSLY. N-linked (GlcNAc...) asparagine glycosylation occurs at Asn403. The segment at residues 420–440 is an intramembrane region (pore-forming); that stretch reads VSSLYFTMTSLTTIGFGNIAP. The Selectivity filter motif lies at 432–437; that stretch reads TIGFGN. Topologically, residues 441–446 are extracellular; sequence TTDVEK. Residues 447–467 traverse the membrane as a helical segment; that stretch reads MFSVAMMMVGSLLYATIFGNV. Residues 468–988 lie on the Cytoplasmic side of the membrane; sequence TTIFQQMYAN…PESDKDEIHF (521 aa). 550–667 lines the a nucleoside 3',5'-cyclic phosphate pocket; it reads AFRLASDGCL…NSFSRNLTLT (118 aa). A calmodulin-binding region spans residues 704–715; the sequence is HPVRKLFQKFKQ. A disordered region spans residues 717 to 742; the sequence is KELRNQGSTQGDPERNQLQVESRSLQ. The segment covering 721-742 has biased composition (polar residues); the sequence is NQGSTQGDPERNQLQVESRSLQ. Residue Lys785 forms a Glycyl lysine isopeptide (Lys-Gly) (interchain with G-Cter in ubiquitin) linkage. The disordered stretch occupies residues 838-890; that stretch reads GLLSEDPKSSDSENSVTKNPLRKTDSCDSGITKSDLRLDKAGEARSPLEHSPI. Basic and acidic residues predominate over residues 871 to 885; the sequence is SDLRLDKAGEARSPL. Ser883 carries the phosphoserine modification. The segment at 909–948 is CAD (involved in subunit assembly); the sequence is TLQEVKHELKEDIQLLSCRMTALEKQVAEILKILSEKSVP. The tract at residues 969 to 988 is disordered; that stretch reads DIFSVSRPESPESDKDEIHF. The span at 977 to 988 shows a compositional bias: basic and acidic residues; that stretch reads ESPESDKDEIHF.

It belongs to the potassium channel family. H (Eag) (TC 1.A.1.20) subfamily. Kv10.2/KCNH5 sub-subfamily. As to quaternary structure, homotetramer. The potassium channel is probably composed of a homo- or heterotetrameric complex of pore-forming alpha subunits that can associate with modulating beta subunits. Heteromultimer with KCNH1/EAG. Detected in brain, skeletal muscle, heart, placenta, lung and liver, and at low levels in kidney.

It localises to the membrane. It catalyses the reaction K(+)(in) = K(+)(out). Pore-forming (alpha) subunit of a voltage-gated delayed rectifier potassium channel that mediates outward-rectifying potassium currents which, on depolarization, reaches a steady-state level and do not inactivate. The kinetic is characterized by a slow activation time course and a small voltage dependence of the activation time constants, therefore, starts to open at more negative voltages. The activation kinetics depend on the prepulse potential and external divalent cation concentration. The time course of activation is biphasic with a fast and a slowly activating current component. With negative prepulses, the current activation is delayed and slowed down several fold, whereas more positive prepulses speed up activation, therefore the activation rate depends on holding potential. This Homo sapiens (Human) protein is Voltage-gated delayed rectifier potassium channel KCNH5.